The chain runs to 139 residues: ATP synthase epsilon chain (139 aa).

The protein belongs to the ATPase epsilon chain family. F-type ATPases have 2 components, CF(1) - the catalytic core - and CF(0) - the membrane proton channel. CF(1) has five subunits: alpha(3), beta(3), gamma(1), delta(1), epsilon(1). CF(0) has three main subunits: a, b and c.

Its subcellular location is the cell inner membrane. Functionally, produces ATP from ADP in the presence of a proton gradient across the membrane. In Shigella boydii serotype 18 (strain CDC 3083-94 / BS512), this protein is ATP synthase epsilon chain.